Here is a 417-residue protein sequence, read N- to C-terminus: Cysteate synthase (417 aa).

Lysine 104 carries the N6-(pyridoxal phosphate)lysine modification. 2 residues coordinate pyridoxal 5'-phosphate: asparagine 131 and threonine 371.

Belongs to the threonine synthase family. Cysteate synthase subfamily. Homotrimer. It depends on pyridoxal 5'-phosphate as a cofactor.

It catalyses the reaction O-phospho-L-serine + sulfite + H(+) = L-cysteate + phosphate. The protein operates within cofactor biosynthesis; coenzyme M biosynthesis. In terms of biological role, specifically catalyzes the beta-elimination of phosphate from L-phosphoserine and the beta-addition of sulfite to the dehydroalanine intermediate to produce L-cysteate. This is Cysteate synthase from Methanococcoides burtonii (strain DSM 6242 / NBRC 107633 / OCM 468 / ACE-M).